We begin with the raw amino-acid sequence, 275 residues long: Probable aquaporin NIP7-1 (275 aa).

The span at 1–11 (MNGEARSRVVD) shows a compositional bias: basic and acidic residues. Residues 1-26 (MNGEARSRVVDQEAGSTPSTLRDEDH) are disordered. Helical transmembrane passes span 47–67 (IVMA…GVIS) and 76–96 (VGLL…VYSI). The short motif at 105-107 (NPS) is the NPA 1 element. The next 3 helical transmembrane spans lie at 127–147 (ITAQ…VYGV), 161–181 (VSAF…ASAL), and 192–212 (LTGF…GPIS). The NPA 2 signature appears at 217 to 219 (NPA). The chain crosses the membrane as a helical span at residues 231–251 (FEDLWIYMTAPVIGAIIGVLT). Residue Ser272 is modified to Phosphoserine.

It belongs to the MIP/aquaporin (TC 1.A.8) family. NIP (TC 1.A.8.12) subfamily. In terms of tissue distribution, expressed in floral buds.

Its subcellular location is the membrane. Aquaporins facilitate the transport of water and small neutral solutes across cell membranes. The polypeptide is Probable aquaporin NIP7-1 (NIP7-1) (Arabidopsis thaliana (Mouse-ear cress)).